The following is a 322-amino-acid chain: Epiphycan (322 aa).

A signal peptide spans 1–19; sequence MKTLAGLVLGLVIFDAAVT. A glycan (O-linked (GalNAc...) threonine) is linked at threonine 60. Residue serine 64 is glycosylated (O-linked (Xyl...) (dermatan sulfate) serine). Residues 64–101 form a disordered region; that stretch reads SGNRELLTPPPQPEKAQEEEEEEESTPRLIDGSSPQEP. Serine 96 carries an O-linked (GalNAc...) serine glycan. The LRRNT domain maps to 106–143; sequence VLGPHTNEDFPTCLLCTCISTTVYCDDHELDAIPPLPK. A disulfide bridge links cysteine 118 with cysteine 130. LRR repeat units follow at residues 144-165, 168-189, 192-213, 238-258, and 259-280; these read NTAY…DFAS, DLKR…AFRK, QLRE…PTTL, DLHH…PLPE, and NLRA…TFCN. The cysteines at positions 279 and 312 are disulfide-linked. Residues asparagine 283 and asparagine 302 are each glycosylated (N-linked (GlcNAc...) asparagine). An LRR 6 repeat occupies 290–310; sequence ALEDIRLDGNPINLSKTPQAY.

Belongs to the small leucine-rich proteoglycan (SLRP) family. SLRP class III subfamily. The O-linked polysaccharides on Thr-60 and Ser-96 are probably the mucin type linked to GalNAc. There is one glycosaminoglycan chain, known to be dermatan sulfate, and it is probably the O-glycosylation at Ser-64. In terms of tissue distribution, cartilage, ligament, and placenta.

Its subcellular location is the secreted. The protein localises to the extracellular space. It is found in the extracellular matrix. May have a role in bone formation and also in establishing the ordered structure of cartilage through matrix organization. The sequence is that of Epiphycan (EPYC) from Homo sapiens (Human).